Consider the following 106-residue polypeptide: Cyclin-dependent protein kinase inhibitor SMR15 (106 aa).

Probable cyclin-dependent protein kinase (CDK) inhibitor that functions as a repressor of mitosis in the endoreduplication cell cycle. In Arabidopsis thaliana (Mouse-ear cress), this protein is Cyclin-dependent protein kinase inhibitor SMR15.